A 232-amino-acid chain; its full sequence is MADTKQKRVVVAIDGPAGAGKSTIAKGLASRLGFIYIDTGAMYRAVALWALRQGVDSGDMHRMEQLAMAAQIELGPGTISLNGEDVTQAIRTPEVSNGASKIGVIPGVRRAMVAKQREIGERTSVVMEGRDIGTVVFPQADVKIFLDANPDERVRRRYQEIRTKEDPPPISQGQLAAEMKERDMRDSTRADAPLAQAPDAVYLDSTALSIAEVEEAILKIVRSRVTNGRDFS.

Residue 15–23 participates in ATP binding; it reads GPAGAGKST. Residues 164–192 form a disordered region; the sequence is KEDPPPISQGQLAAEMKERDMRDSTRADA. Basic and acidic residues predominate over residues 178-189; it reads EMKERDMRDSTR.

It belongs to the cytidylate kinase family. Type 1 subfamily.

The protein localises to the cytoplasm. The enzyme catalyses CMP + ATP = CDP + ADP. It catalyses the reaction dCMP + ATP = dCDP + ADP. The protein is Cytidylate kinase of Solibacter usitatus (strain Ellin6076).